A 309-amino-acid chain; its full sequence is Homoserine kinase (309 aa).

95–105 lines the ATP pocket; it reads PQSRGLGSSAA.

This sequence belongs to the GHMP kinase family. Homoserine kinase subfamily.

It is found in the cytoplasm. It carries out the reaction L-homoserine + ATP = O-phospho-L-homoserine + ADP + H(+). The protein operates within amino-acid biosynthesis; L-threonine biosynthesis; L-threonine from L-aspartate: step 4/5. Its function is as follows. Catalyzes the ATP-dependent phosphorylation of L-homoserine to L-homoserine phosphate. The sequence is that of Homoserine kinase from Corynebacterium glutamicum (strain R).